The sequence spans 124 residues: Small ribosomal subunit protein uS13 (124 aa).

Residues 95 to 124 (GLPVRGQRTKTNARTRKGPKRTIAGKKKAR) form a disordered region.

This sequence belongs to the universal ribosomal protein uS13 family. As to quaternary structure, part of the 30S ribosomal subunit. Forms a loose heterodimer with protein S19. Forms two bridges to the 50S subunit in the 70S ribosome.

Functionally, located at the top of the head of the 30S subunit, it contacts several helices of the 16S rRNA. In the 70S ribosome it contacts the 23S rRNA (bridge B1a) and protein L5 of the 50S subunit (bridge B1b), connecting the 2 subunits; these bridges are implicated in subunit movement. Contacts the tRNAs in the A and P-sites. The chain is Small ribosomal subunit protein uS13 from Mycobacterium sp. (strain JLS).